A 452-amino-acid chain; its full sequence is Nuclear distribution protein nudF 2 (452 aa).

The stretch at 76-101 forms a coiled coil; that stretch reads ALQILDLESKVAGLQAELSSLTLTSR. 7 WD repeats span residues 123–164, 166–206, 210–250, 253–292, 295–355, 357–396, and 401–449; these read SHRD…RTLK, HIRA…ANIR, GHDH…CVKV, SSDAWIRDISSSFDGKWLVAGGRDQAVTVWEVATAEQKSA, GHEN…IKTL, GHDNWVRDLVFHPNGKHLISVADDKTIRCWDLSQEGKLVK, and AHSH…SCVR.

Belongs to the WD repeat LIS1/nudF family. Self-associates. Interacts with nudE and dynein.

It localises to the cytoplasm. It is found in the cytoskeleton. Its subcellular location is the spindle pole. Its function is as follows. Positively regulates the activity of the minus-end directed microtubule motor protein dynein. May enhance dynein-mediated microtubule sliding by targeting dynein to the microtubule plus end. Required for nuclear migration during vegetative growth as well as development. Required for retrograde early endosome (EE) transport from the hyphal tip. Required for localization of dynein to the mitotic spindle poles. Recruits additional proteins to the dynein complex at SPBs. The chain is Nuclear distribution protein nudF 2 from Talaromyces marneffei (strain ATCC 18224 / CBS 334.59 / QM 7333) (Penicillium marneffei).